Here is a 242-residue protein sequence, read N- to C-terminus: Uridylate kinase (242 aa).

11-14 contributes to the ATP binding site; that stretch reads KLSG. The involved in allosteric activation by GTP stretch occupies residues 19-24; that stretch reads GEKGAG. G53 provides a ligand contact to UMP. The ATP site is built by G54 and R58. UMP-binding positions include D73 and 134-141; that span reads IGSPYFST. N162, Y168, and D171 together coordinate ATP.

This sequence belongs to the UMP kinase family. In terms of assembly, homohexamer.

Its subcellular location is the cytoplasm. The enzyme catalyses UMP + ATP = UDP + ADP. It functions in the pathway pyrimidine metabolism; CTP biosynthesis via de novo pathway; UDP from UMP (UMPK route): step 1/1. With respect to regulation, allosterically activated by GTP. Inhibited by UTP. Catalyzes the reversible phosphorylation of UMP to UDP. The polypeptide is Uridylate kinase (Streptococcus pyogenes serotype M2 (strain MGAS10270)).